Consider the following 290-residue polypeptide: ATP synthase gamma chain (290 aa).

The protein belongs to the ATPase gamma chain family. As to quaternary structure, F-type ATPases have 2 components, CF(1) - the catalytic core - and CF(0) - the membrane proton channel. CF(1) has five subunits: alpha(3), beta(3), gamma(1), delta(1), epsilon(1). CF(0) has three main subunits: a, b and c.

The protein localises to the cell inner membrane. Its function is as follows. Produces ATP from ADP in the presence of a proton gradient across the membrane. The gamma chain is believed to be important in regulating ATPase activity and the flow of protons through the CF(0) complex. In Anaeromyxobacter sp. (strain Fw109-5), this protein is ATP synthase gamma chain.